We begin with the raw amino-acid sequence, 294 residues long: MHPRFQTAFAQLADNLQSALAPILADHHFPAMLAAEQVSTLKNATGLDEDALAFALLPLAAACARTDLSHFNVGAIARGVSGNWYFGANMEFLGATMQQTVHAEQSAISHAWLCGEKGLAAVTVNYTPCGHCRQFMNELNSGLDLRIHLPGRAPHTLRDYLPDAFGPKDLEIKTLLMDEQDHGFALTGDTLTQAAITAANKSHMPYSQSPSGVALECKDGRIFTGSYAENAAFNPTLPPLQGALNLLSLNGYDYPDIQRAILAEKGDAALIQWDATAATLKALGCHNIDRVLLG.

CMP/dCMP-type deaminase domains follow at residues 48-168 (DEDA…FGPK) and 186-294 (LTGD…VLLG). 89–91 (NME) contacts substrate. His102 is a binding site for Zn(2+). The Proton donor role is filled by Glu104. The Zn(2+) site is built by Cys129 and Cys132.

The protein belongs to the cytidine and deoxycytidylate deaminase family. In terms of assembly, homodimer. Zn(2+) is required as a cofactor.

The catalysed reaction is cytidine + H2O + H(+) = uridine + NH4(+). It catalyses the reaction 2'-deoxycytidine + H2O + H(+) = 2'-deoxyuridine + NH4(+). Functionally, this enzyme scavenges exogenous and endogenous cytidine and 2'-deoxycytidine for UMP synthesis. The sequence is that of Cytidine deaminase from Salmonella arizonae (strain ATCC BAA-731 / CDC346-86 / RSK2980).